We begin with the raw amino-acid sequence, 124 residues long: Fluoride-specific ion channel FluC (124 aa).

4 consecutive transmembrane segments (helical) span residues 1–21, 38–58, 69–89, and 97–117; these read MIPLILAVSAGGVAGTLLRFA, TLAVNIVGCLLIGVLYGLFLV, GLIVGFLGGLTTFSSFSLDTV, and VALALGYAALSVFGGLLATWA. G76 and T79 together coordinate Na(+).

Belongs to the fluoride channel Fluc/FEX (TC 1.A.43) family.

The protein resides in the cell inner membrane. The catalysed reaction is fluoride(in) = fluoride(out). With respect to regulation, na(+) is not transported, but it plays an essential structural role and its presence is essential for fluoride channel function. Its function is as follows. Fluoride-specific ion channel. Important for reducing fluoride concentration in the cell, thus reducing its toxicity. The polypeptide is Fluoride-specific ion channel FluC (Pseudomonas fluorescens (strain ATCC BAA-477 / NRRL B-23932 / Pf-5)).